The chain runs to 379 residues: MPTVFPHDSVGLVTPQTAHFSEPLALACGRSLPAYDLIYETYGQLNAARSNAVLICHALSGHHHAAGFHSADDRKPGWWDSCIGPGKPIDTDKFFVVSLNNLGGCNGSTGPSSIDPDTGKPFGANFPVVTVEDWVNSQARLADVLNIDTWAAVIGGSLGGMQALQWTISYPDRVRHCLAIASAPKLSAQNIAFNEVARQAILTDPEFHGGSFQERGVIPKRGLMLARMVGHITYLSDDSMGEKFGRGLKSEKLNYDFHSVEFQVESYLRYQGEEFSGRFDANTYLLMTKALDYFDPAANFNDDLAKTFANATARFCVMSFTTDWRFSPARSRELVDALMAARKDVCYLEIDAPQGHDAFLIPIPRYLQAFGNYMNRISL.

Residues 51 to 360 form the AB hydrolase-1 domain; it reads NAVLICHALS…DAPQGHDAFL (310 aa). Serine 157 acts as the Nucleophile in catalysis. Arginine 227 serves as a coordination point for substrate. Residues aspartate 323 and histidine 356 contribute to the active site. Position 357 (aspartate 357) interacts with substrate.

It belongs to the AB hydrolase superfamily. MetX family. Homodimer.

It localises to the cytoplasm. It catalyses the reaction L-homoserine + succinyl-CoA = O-succinyl-L-homoserine + CoA. Its pathway is amino-acid biosynthesis; L-methionine biosynthesis via de novo pathway; O-succinyl-L-homoserine from L-homoserine: step 1/1. In terms of biological role, transfers a succinyl group from succinyl-CoA to L-homoserine, forming succinyl-L-homoserine. This chain is Homoserine O-succinyltransferase, found in Pseudomonas syringae pv. tomato (strain ATCC BAA-871 / DC3000).